A 158-amino-acid chain; its full sequence is Snaclec jerdonuxin subunit alpha (158 aa).

Positions 1–23 (MGRFTFVSFGLLVVFLSLSGTGA) are cleaved as a signal peptide. 3 disulfides stabilise this stretch: Cys27–Cys38, Cys55–Cys152, and Cys127–Cys144. The C-type lectin domain occupies 34–153 (YDRYCYQAFS…CGTENPFVCK (120 aa)).

It belongs to the snaclec family. As to quaternary structure, tetramer of 4 heterodimers of alpha and beta subunits; disulfide-linked. In terms of tissue distribution, expressed by the venom gland.

It is found in the secreted. Functionally, snaclec that strongly induces platelet aggregation, in a dose-dependent manner. This Protobothrops jerdonii (Jerdon's pitviper) protein is Snaclec jerdonuxin subunit alpha.